A 296-amino-acid polypeptide reads, in one-letter code: tRNA U34 carboxymethyltransferase (296 aa).

Residues Lys-64, Trp-78, Lys-83, Gly-102, 124–126, 151–152, Tyr-171, and Arg-286 each bind carboxy-S-adenosyl-L-methionine; these read DPS and VE.

Belongs to the class I-like SAM-binding methyltransferase superfamily. CmoB family. Homotetramer.

The enzyme catalyses carboxy-S-adenosyl-L-methionine + 5-hydroxyuridine(34) in tRNA = 5-carboxymethoxyuridine(34) in tRNA + S-adenosyl-L-homocysteine + H(+). In terms of biological role, catalyzes carboxymethyl transfer from carboxy-S-adenosyl-L-methionine (Cx-SAM) to 5-hydroxyuridine (ho5U) to form 5-carboxymethoxyuridine (cmo5U) at position 34 in tRNAs. The protein is tRNA U34 carboxymethyltransferase of Sulfurimonas denitrificans (strain ATCC 33889 / DSM 1251) (Thiomicrospira denitrificans (strain ATCC 33889 / DSM 1251)).